A 223-amino-acid chain; its full sequence is Ribosome maturation factor RimM (223 aa).

A PRC barrel domain is found at 142-223; that stretch reads ADEFYWVDLI…RIVVDWEADY (82 aa).

The protein belongs to the RimM family. In terms of assembly, binds ribosomal protein uS19.

Its subcellular location is the cytoplasm. In terms of biological role, an accessory protein needed during the final step in the assembly of 30S ribosomal subunit, possibly for assembly of the head region. Essential for efficient processing of 16S rRNA. May be needed both before and after RbfA during the maturation of 16S rRNA. It has affinity for free ribosomal 30S subunits but not for 70S ribosomes. The chain is Ribosome maturation factor RimM from Burkholderia multivorans (strain ATCC 17616 / 249).